Reading from the N-terminus, the 378-residue chain is Erythronate-4-phosphate dehydrogenase (378 aa).

Substrate contacts are provided by S45 and T66. 2 residues coordinate NAD(+): D146 and T175. R208 is a catalytic residue. Position 232 (D232) interacts with NAD(+). Residue E237 is part of the active site. Residue H254 is the Proton donor of the active site. G257 is an NAD(+) binding site. Substrate is bound at residue Y258.

The protein belongs to the D-isomer specific 2-hydroxyacid dehydrogenase family. PdxB subfamily. As to quaternary structure, homodimer.

It is found in the cytoplasm. The enzyme catalyses 4-phospho-D-erythronate + NAD(+) = (R)-3-hydroxy-2-oxo-4-phosphooxybutanoate + NADH + H(+). It participates in cofactor biosynthesis; pyridoxine 5'-phosphate biosynthesis; pyridoxine 5'-phosphate from D-erythrose 4-phosphate: step 2/5. Functionally, catalyzes the oxidation of erythronate-4-phosphate to 3-hydroxy-2-oxo-4-phosphonooxybutanoate. This chain is Erythronate-4-phosphate dehydrogenase, found in Salmonella dublin (strain CT_02021853).